Consider the following 454-residue polypeptide: Bifunctional protein GlmU (454 aa).

The pyrophosphorylase stretch occupies residues 1–228; that stretch reads MSPLHVVILA…PFEVQGVNNR (228 aa). UDP-N-acetyl-alpha-D-glucosamine-binding positions include 9–12, lysine 23, glutamine 74, 79–80, 101–103, glycine 138, glutamate 153, asparagine 168, and asparagine 226; these read LAAG, GT, and YGD. Aspartate 103 is a binding site for Mg(2+). Asparagine 226 serves as a coordination point for Mg(2+). Positions 229–249 are linker; the sequence is LQLAELERWYQRQQAERLMTE. The segment at 250-454 is N-acetyltransferase; it reads GASLADPARI…IAGWERPKKA (205 aa). The UDP-N-acetyl-alpha-D-glucosamine site is built by arginine 332 and lysine 350. Catalysis depends on histidine 362, which acts as the Proton acceptor. Positions 365 and 376 each coordinate UDP-N-acetyl-alpha-D-glucosamine. Acetyl-CoA-binding positions include alanine 379, 385–386, serine 404, alanine 422, and arginine 439; that span reads NY.

The protein in the N-terminal section; belongs to the N-acetylglucosamine-1-phosphate uridyltransferase family. It in the C-terminal section; belongs to the transferase hexapeptide repeat family. Homotrimer. It depends on Mg(2+) as a cofactor.

It is found in the cytoplasm. It carries out the reaction alpha-D-glucosamine 1-phosphate + acetyl-CoA = N-acetyl-alpha-D-glucosamine 1-phosphate + CoA + H(+). The catalysed reaction is N-acetyl-alpha-D-glucosamine 1-phosphate + UTP + H(+) = UDP-N-acetyl-alpha-D-glucosamine + diphosphate. The protein operates within nucleotide-sugar biosynthesis; UDP-N-acetyl-alpha-D-glucosamine biosynthesis; N-acetyl-alpha-D-glucosamine 1-phosphate from alpha-D-glucosamine 6-phosphate (route II): step 2/2. Its pathway is nucleotide-sugar biosynthesis; UDP-N-acetyl-alpha-D-glucosamine biosynthesis; UDP-N-acetyl-alpha-D-glucosamine from N-acetyl-alpha-D-glucosamine 1-phosphate: step 1/1. It participates in bacterial outer membrane biogenesis; LPS lipid A biosynthesis. In terms of biological role, catalyzes the last two sequential reactions in the de novo biosynthetic pathway for UDP-N-acetylglucosamine (UDP-GlcNAc). The C-terminal domain catalyzes the transfer of acetyl group from acetyl coenzyme A to glucosamine-1-phosphate (GlcN-1-P) to produce N-acetylglucosamine-1-phosphate (GlcNAc-1-P), which is converted into UDP-GlcNAc by the transfer of uridine 5-monophosphate (from uridine 5-triphosphate), a reaction catalyzed by the N-terminal domain. The chain is Bifunctional protein GlmU from Marinobacter nauticus (strain ATCC 700491 / DSM 11845 / VT8) (Marinobacter aquaeolei).